Consider the following 1027-residue polypeptide: Pro-apoptotic serine protease nma111 (1027 aa).

The tract at residues 1-46 is disordered; the sequence is MDLNGDAGAKRKRSSIVPAERPAKHLKPESSALTPGDSTPANGTVY. Residues 31–42 show a composition bias toward polar residues; it reads SALTPGDSTPAN. Positions 81-265 are serine protease; the sequence is VVSIHFCQTC…AATDYFLPLD (185 aa). Catalysis depends on charge relay system residues histidine 119, aspartate 150, and serine 232. PDZ domains are found at residues 288-373 and 875-956; these read QWIL…LLVQ and VFCG…VTFD. Residues 991–1027 form a disordered region; it reads HNKSKHKDGIAPDAANLNPDAMEQGYDGASDIEPEAE.

It belongs to the peptidase S1C family.

The protein localises to the nucleus. Its function is as follows. Nuclear serine protease which mediates apoptosis. The polypeptide is Pro-apoptotic serine protease nma111 (nma111) (Aspergillus oryzae (strain ATCC 42149 / RIB 40) (Yellow koji mold)).